We begin with the raw amino-acid sequence, 592 residues long: Autophagy-related protein 22-1 (592 aa).

4 helical membrane-spanning segments follow: residues 31 to 51, 108 to 128, 143 to 163, and 167 to 187; these read YGWA…PITL, TASF…VIII, LLIV…VVVP, and LLGG…FVLL. A glycan (N-linked (GlcNAc...) asparagine) is linked at asparagine 213. Helical transmembrane passes span 271-291, 301-321, 364-384, 398-418, 433-453, 468-490, 502-524, and 534-554; these read IGIG…VVVV, LVLF…SLWL, IVIF…VSGT, AALG…AFSW, IIAC…GFIP, MYPL…RSFF, FYAL…VGAI, and AFVF…LVDV. The segment at 572-592 is disordered; the sequence is PQGSEYGAISDDQTTEDPIEE.

Belongs to the ATG22 family.

The protein resides in the vacuole membrane. Vacuolar effluxer which mediate the efflux of amino acids resulting from autophagic degradation. The release of autophagic amino acids allows the maintenance of protein synthesis and viability during nitrogen starvation. The sequence is that of Autophagy-related protein 22-1 (atg22-1) from Penicillium rubens (strain ATCC 28089 / DSM 1075 / NRRL 1951 / Wisconsin 54-1255) (Penicillium chrysogenum).